We begin with the raw amino-acid sequence, 136 residues long: DNA-directed RNA polymerase subunit omega (136 aa).

The span at Ser-90–Ser-102 shows a compositional bias: low complexity. Residues Ser-90 to Glu-136 form a disordered region. Basic and acidic residues predominate over residues Ser-103 to Arg-120.

The protein belongs to the RNA polymerase subunit omega family. In terms of assembly, the RNAP catalytic core consists of 2 alpha, 1 beta, 1 beta' and 1 omega subunit. When a sigma factor is associated with the core the holoenzyme is formed, which can initiate transcription.

It catalyses the reaction RNA(n) + a ribonucleoside 5'-triphosphate = RNA(n+1) + diphosphate. In terms of biological role, promotes RNA polymerase assembly. Latches the N- and C-terminal regions of the beta' subunit thereby facilitating its interaction with the beta and alpha subunits. The polypeptide is DNA-directed RNA polymerase subunit omega (Methylorubrum populi (strain ATCC BAA-705 / NCIMB 13946 / BJ001) (Methylobacterium populi)).